The chain runs to 172 residues: Mitochondrial import inner membrane translocase subunit Tim17-B (172 aa).

The cysteines at positions 9 and 78 are disulfide-linked. The next 3 helical transmembrane spans lie at 17-37 (CGGA…IKGF), 61-77 (QIGG…STID), and 113-133 (VGSA…GILL). Positions 147-172 (FLEDPSQLTPKEGSPAPGYPNYQQYH) are disordered.

The protein belongs to the Tim17/Tim22/Tim23 family. Component of the TIM23 complex at least composed of TIMM23, TIMM17 (TIMM17A or TIMM17B) and TIMM50. The complex interacts with the TIMM44 component of the PAM complex. The complex also interacts with DNAJC15.

It localises to the mitochondrion inner membrane. Its function is as follows. Essential component of the TIM23 complex, a complex that mediates the translocation of transit peptide-containing proteins across the mitochondrial inner membrane. The chain is Mitochondrial import inner membrane translocase subunit Tim17-B (Timm17b) from Mus musculus (Mouse).